Here is a 120-residue protein sequence, read N- to C-terminus: Immunoglobulin kappa variable 2-29 (120 aa).

Positions 1–20 (MRLPAQLLGLLMLWIPGSSA) are cleaved as a signal peptide. Residues 21–43 (DIVMTQTPLSLSVTPGQPASISC) are framework-1. Positions 21-120 (DIVMTQTPLS…YYCMQGIHLP (100 aa)) constitute an Ig-like domain. A disulfide bridge links C43 with C113. The interval 44–59 (KSSQSLLHSDGKTYLY) is complementarity-determining-1. The segment at 60 to 74 (WYLQKPGQSPQLLIY) is framework-2. Positions 75–81 (EVSSRFS) are complementarity-determining-2. Residues 82-113 (GVPDRFSGSGSGTDFTLKISRVEAEDVGVYYC) are framework-3. The tract at residues 114-120 (MQGIHLP) is complementarity-determining-3.

As to quaternary structure, immunoglobulins are composed of two identical heavy chains and two identical light chains; disulfide-linked.

It localises to the secreted. Its subcellular location is the cell membrane. Its function is as follows. V region of the variable domain of immunoglobulin light chains that participates in the antigen recognition. Immunoglobulins, also known as antibodies, are membrane-bound or secreted glycoproteins produced by B lymphocytes. In the recognition phase of humoral immunity, the membrane-bound immunoglobulins serve as receptors which, upon binding of a specific antigen, trigger the clonal expansion and differentiation of B lymphocytes into immunoglobulins-secreting plasma cells. Secreted immunoglobulins mediate the effector phase of humoral immunity, which results in the elimination of bound antigens. The antigen binding site is formed by the variable domain of one heavy chain, together with that of its associated light chain. Thus, each immunoglobulin has two antigen binding sites with remarkable affinity for a particular antigen. The variable domains are assembled by a process called V-(D)-J rearrangement and can then be subjected to somatic hypermutations which, after exposure to antigen and selection, allow affinity maturation for a particular antigen. The chain is Immunoglobulin kappa variable 2-29 from Homo sapiens (Human).